We begin with the raw amino-acid sequence, 120 residues long: Large ribosomal subunit protein uL18 (120 aa).

The protein belongs to the universal ribosomal protein uL18 family. In terms of assembly, part of the 50S ribosomal subunit; part of the 5S rRNA/L5/L18/L25 subcomplex. Contacts the 5S and 23S rRNAs.

In terms of biological role, this is one of the proteins that bind and probably mediate the attachment of the 5S RNA into the large ribosomal subunit, where it forms part of the central protuberance. This is Large ribosomal subunit protein uL18 from Afipia carboxidovorans (strain ATCC 49405 / DSM 1227 / KCTC 32145 / OM5) (Oligotropha carboxidovorans).